The chain runs to 727 residues: NADH-ubiquinone oxidoreductase 75 kDa subunit, mitochondrial (727 aa).

The transit peptide at 1 to 23 (MLRIPVRKALVGLSKSPKGCVRT) directs the protein to the mitochondrion. The region spanning 30-108 (NLIEVFVDGQ…GWNILTNSEK (79 aa)) is the 2Fe-2S ferredoxin-type domain. 3 residues coordinate [2Fe-2S] cluster: C64, C75, and C78. The residue at position 84 (K84) is an N6-acetyllysine. C92 is a [2Fe-2S] cluster binding site. Residues 108–147 (KSKKAREGVMELLLANHPLDCPICDQGGECDLQDQSMMFG) enclose the 4Fe-4S His(Cys)3-ligated-type domain. [4Fe-4S] cluster contacts are provided by H124, C128, C131, C137, C176, C179, C182, and C226. The region spanning 245–301 (TRKTESIDVMDAVGSNIVVSTRTGEVMRILPRMHEDINEEWISDKTRFAYDGLKRQR) is the 4Fe-4S Mo/W bis-MGD-type domain. 3 positions are modified to N6-acetyllysine: K467, K499, and K709.

Belongs to the complex I 75 kDa subunit family. Core subunit of respiratory chain NADH dehydrogenase (Complex I) which is composed of 45 different subunits. This is the largest subunit of complex I and it is a component of the iron-sulfur (IP) fragment of the enzyme. Complex I associates with ubiquinol-cytochrome reductase complex (Complex III) to form supercomplexes. Interacts with MDM2 and AKAP1. Requires [2Fe-2S] cluster as cofactor. The cofactor is [4Fe-4S] cluster.

It localises to the mitochondrion inner membrane. The catalysed reaction is a ubiquinone + NADH + 5 H(+)(in) = a ubiquinol + NAD(+) + 4 H(+)(out). Functionally, core subunit of the mitochondrial membrane respiratory chain NADH dehydrogenase (Complex I) which catalyzes electron transfer from NADH through the respiratory chain, using ubiquinone as an electron acceptor. Essential for catalysing the entry and efficient transfer of electrons within complex I. Plays a key role in the assembly and stability of complex I and participates in the association of complex I with ubiquinol-cytochrome reductase complex (Complex III) to form supercomplexes. The sequence is that of NADH-ubiquinone oxidoreductase 75 kDa subunit, mitochondrial (NDUFS1) from Pongo abelii (Sumatran orangutan).